The following is a 173-amino-acid chain: Mesencephalic astrocyte-derived neurotrophic factor homolog (173 aa).

Positions 1–22 (MNTSQIVLMFCLVVGVAQTALA) are cleaved as a signal peptide. Intrachain disulfides connect Cys28–Cys114, Cys31–Cys103, Cys61–Cys72, and Cys148–Cys151.

It belongs to the ARMET family.

The protein resides in the secreted. In terms of biological role, required during the maturation of the embryonic nervous system for maintenance of neuronal and cuticular connectivity. Essential for maintenance of dopaminergic neurons and dopamine levels. This is Mesencephalic astrocyte-derived neurotrophic factor homolog from Drosophila grimshawi (Hawaiian fruit fly).